The sequence spans 233 residues: Auxin-responsive protein IAA11 (233 aa).

Disordered regions lie at residues 1–27 (MAGL…RSSG) and 46–100 (PAAV…PKAQ). Residues 11-15 (LRLGL) carry the EAR-like (transcriptional repression) motif. Acidic residues predominate over residues 54–63 (GAQEDKEDAD). The PB1 domain occupies 122–217 (AALVKVSMDG…SCKRLRIMKG (96 aa)).

The protein belongs to the Aux/IAA family. Homodimers and heterodimers. In terms of tissue distribution, highly expressed in etiolated shoots. Expressed in roots.

The protein localises to the nucleus. Aux/IAA proteins are short-lived transcriptional factors that function as repressors of early auxin response genes at low auxin concentrations. The protein is Auxin-responsive protein IAA11 (IAA11) of Oryza sativa subsp. japonica (Rice).